Consider the following 1206-residue polypeptide: Phosphoglucan, water dikinase, chloroplastic (1206 aa).

Disordered stretches follow at residues 1–20 (MTSL…PRRG) and 52–71 (RSAA…DSSK). Residues 1–56 (MTSLRPLETSLSIGGRPRRGLVLPPPGVGAGVLLRRGAMALPGRRGFACRGRSAAS) constitute a chloroplast transit peptide. The CBM20 domain occupies 67 to 168 (RDSSKQPLVH…KFDIVCHWNR (102 aa)). H776 acts as the Tele-phosphohistidine intermediate in catalysis.

This sequence belongs to the PEP-utilizing enzyme family. In terms of assembly, homodimer. Mg(2+) serves as cofactor.

The protein localises to the plastid. It localises to the chloroplast. The catalysed reaction is [(1-&gt;4)-6-phospho-alpha-D-glucosyl](n) + n ATP + n H2O = [(1-&gt;4)-3,6-bisphospho-alpha-D-glucosyl](n) + n AMP + n phosphate + 2n H(+). Functionally, mediates the incorporation of phosphate into starch-like phospho-alpha-glucan, mostly at the C-3 position of glucose units. May be required for starch degradation, suggesting that the phosphate content of starch regulates its degradability. The chain is Phosphoglucan, water dikinase, chloroplastic (GWD3) from Oryza sativa subsp. japonica (Rice).